We begin with the raw amino-acid sequence, 831 residues long: Periplasmic nitrate reductase (831 aa).

A signal peptide (tat-type signal) is located at residues Met1 to Ala31. Positions Ile41–Asp97 constitute a 4Fe-4S Mo/W bis-MGD-type domain. [4Fe-4S] cluster is bound by residues Cys48, Cys51, Cys55, and Cys83. Residues Lys85, Gln152, Asn177, Cys181, Trp214–Met221, Ser245–His249, Gly264–Asp266, Met375, Gln379, Asn485, Ser511–Asp512, Lys534, Asp561, and Thr721–Ser730 each bind Mo-bis(molybdopterin guanine dinucleotide). Trp797 is a substrate binding site. Residues Asn805 and Lys822 each contribute to the Mo-bis(molybdopterin guanine dinucleotide) site.

Belongs to the prokaryotic molybdopterin-containing oxidoreductase family. NasA/NapA/NarB subfamily. In terms of assembly, component of the periplasmic nitrate reductase NapAB complex composed of NapA and NapB. The cofactor is [4Fe-4S] cluster. Mo-bis(molybdopterin guanine dinucleotide) is required as a cofactor. Post-translationally, predicted to be exported by the Tat system. The position of the signal peptide cleavage has not been experimentally proven.

It localises to the periplasm. It catalyses the reaction 2 Fe(II)-[cytochrome] + nitrate + 2 H(+) = 2 Fe(III)-[cytochrome] + nitrite + H2O. In terms of biological role, catalytic subunit of the periplasmic nitrate reductase complex NapAB. Receives electrons from NapB and catalyzes the reduction of nitrate to nitrite. This Paracoccus pantotrophus (Thiosphaera pantotropha) protein is Periplasmic nitrate reductase.